The sequence spans 510 residues: GMP synthase [glutamine-hydrolyzing] (510 aa).

In terms of domain architecture, Glutamine amidotransferase type-1 spans leucine 5 to aspartate 195. Residue cysteine 82 is the Nucleophile of the active site. Active-site residues include histidine 169 and glutamate 171. The 190-residue stretch at tryptophan 196–arginine 385 folds into the GMPS ATP-PPase domain. Serine 223–serine 229 contacts ATP.

As to quaternary structure, homodimer.

The catalysed reaction is XMP + L-glutamine + ATP + H2O = GMP + L-glutamate + AMP + diphosphate + 2 H(+). It functions in the pathway purine metabolism; GMP biosynthesis; GMP from XMP (L-Gln route): step 1/1. Its function is as follows. Catalyzes the synthesis of GMP from XMP. The protein is GMP synthase [glutamine-hydrolyzing] of Clostridium kluyveri (strain NBRC 12016).